We begin with the raw amino-acid sequence, 473 residues long: Putative BTB/POZ domain-containing protein R765 (473 aa).

The BTB domain occupies 2–72 (TNIQLVIKDD…KIYDREITAD (71 aa)).

This sequence belongs to the mimivirus BTB/WD family.

The protein is Putative BTB/POZ domain-containing protein R765 of Acanthamoeba polyphaga mimivirus (APMV).